A 236-amino-acid polypeptide reads, in one-letter code: Pyridoxine 5'-phosphate synthase (236 aa).

Asn-6 contributes to the 3-amino-2-oxopropyl phosphate binding site. 8–9 (DH) contacts 1-deoxy-D-xylulose 5-phosphate. Arg-17 contributes to the 3-amino-2-oxopropyl phosphate binding site. The active-site Proton acceptor is the His-42. 2 residues coordinate 1-deoxy-D-xylulose 5-phosphate: Arg-44 and His-49. Glu-69 serves as the catalytic Proton acceptor. Position 99 (Thr-99) interacts with 1-deoxy-D-xylulose 5-phosphate. Catalysis depends on His-190, which acts as the Proton donor. Residues Gly-191 and 212–213 (GH) each bind 3-amino-2-oxopropyl phosphate.

This sequence belongs to the PNP synthase family. Homooctamer; tetramer of dimers.

The protein localises to the cytoplasm. It carries out the reaction 3-amino-2-oxopropyl phosphate + 1-deoxy-D-xylulose 5-phosphate = pyridoxine 5'-phosphate + phosphate + 2 H2O + H(+). It functions in the pathway cofactor biosynthesis; pyridoxine 5'-phosphate biosynthesis; pyridoxine 5'-phosphate from D-erythrose 4-phosphate: step 5/5. Its function is as follows. Catalyzes the complicated ring closure reaction between the two acyclic compounds 1-deoxy-D-xylulose-5-phosphate (DXP) and 3-amino-2-oxopropyl phosphate (1-amino-acetone-3-phosphate or AAP) to form pyridoxine 5'-phosphate (PNP) and inorganic phosphate. The sequence is that of Pyridoxine 5'-phosphate synthase from Pelodictyon phaeoclathratiforme (strain DSM 5477 / BU-1).